We begin with the raw amino-acid sequence, 429 residues long: Probable M18 family aminopeptidase 2 (429 aa).

Zn(2+) is bound by residues His-82, His-156, and His-401.

Belongs to the peptidase M18 family. It depends on Zn(2+) as a cofactor.

This is Probable M18 family aminopeptidase 2 from Pseudomonas putida (strain ATCC 47054 / DSM 6125 / CFBP 8728 / NCIMB 11950 / KT2440).